Here is a 156-residue protein sequence, read N- to C-terminus: Small ribosomal subunit protein uS7 (156 aa).

It belongs to the universal ribosomal protein uS7 family. As to quaternary structure, part of the 30S ribosomal subunit. Contacts proteins S9 and S11.

In terms of biological role, one of the primary rRNA binding proteins, it binds directly to 16S rRNA where it nucleates assembly of the head domain of the 30S subunit. Is located at the subunit interface close to the decoding center, probably blocks exit of the E-site tRNA. The sequence is that of Small ribosomal subunit protein uS7 from Paramagnetospirillum magneticum (strain ATCC 700264 / AMB-1) (Magnetospirillum magneticum).